We begin with the raw amino-acid sequence, 386 residues long: Zinc finger protein 385A (386 aa).

The segment at 74–98 (ISCNICQIRFNSQSQAEAHYKGNRH) adopts a Matrin-type 1 zinc-finger fold. Residues 90–193 (EAHYKGNRHA…ASLPGGSKEE (104 aa)) are disordered. Positions 103-121 (KGIEAAKTRGREPGVREPG) are enriched in basic and acidic residues. Residues 145 to 351 (NGLGPAPGSP…AGSPLSLRPA (207 aa)) are necessary for binding to ITPR1, CEBPA and p53/TP53 mRNAs. Ser185 carries the phosphoserine modification. The Matrin-type 2 zinc finger occupies 201 to 225 (LYCALCKVAVNSLSQLEAHNKGTKH). Phosphothreonine is present on Thr248. A Matrin-type 3 zinc finger spans residues 261–285 (FHCEICNVKVNSEVQLKQHISSRRH). The tract at residues 279–309 (HISSRRHRDGVAGKPNPLLSRHKKSRGAGEL) is disordered.

In terms of assembly, interacts with ELAVL1; the interaction is indirect, mRNA-dependent and may regulate p53/TP53 expression. Interacts with p53/TP53; the interaction is direct and enhances p53/TP53 transactivation functions on cell-cycle arrest target genes, resulting in growth arrest. Ubiquitinated upon prolonged exposure to genotoxic stress, which leads to proteasomal degradation of ZNF385A and releases p53/TP53 from cell-cycle arrest target gene promoters. As to expression, expressed predominantly in the retina.

The protein localises to the cytoplasm. The protein resides in the nucleus. It localises to the nucleolus. Its subcellular location is the cell projection. It is found in the dendrite. Its function is as follows. RNA-binding protein that affects the localization and the translation of a subset of mRNA. May play a role in adipogenesis through binding to the 3'-UTR of CEBPA mRNA and regulation of its translation. Targets ITPR1 mRNA to dendrites in Purkinje cells, and may regulate its activity-dependent translation. With ELAVL1, binds the 3'-UTR of p53/TP53 mRNAs to control their nuclear export induced by CDKN2A. Hence, may regulate p53/TP53 expression and mediate in part the CDKN2A anti-proliferative activity. May also bind CCNB1 mRNA. Alternatively, may also regulate p53/TP53 activity through direct protein-protein interaction. Interacts with p53/TP53 and promotes cell-cycle arrest over apoptosis enhancing preferentially the DNA binding and transactivation of p53/TP53 on cell-cycle arrest target genes over proapoptotic target genes. May also regulate the ubiquitination and stability of CDKN1A promoting DNA damage-induced cell cycle arrest. Also plays a role in megakaryocytes differentiation. The polypeptide is Zinc finger protein 385A (ZNF385A) (Homo sapiens (Human)).